The following is a 133-amino-acid chain: Small ribosomal subunit protein uS9 (133 aa).

It belongs to the universal ribosomal protein uS9 family.

The polypeptide is Small ribosomal subunit protein uS9 (Ureaplasma urealyticum serovar 10 (strain ATCC 33699 / Western)).